A 763-amino-acid polypeptide reads, in one-letter code: MQKSGVNRNPSLKVAIPQAQQSLRRLGFCSQIATGGSQQSSPIVFPEKRNKKVKASSRRGEVTNDPQVKPKPDEHRIDIGGGDEKSDLLGSLVYAGKLVLDKRKSASGKDATEIQQPAATDISIKKAVDAKLTSSALVWGSDMLQLNDVVSVTYNVGLRHFTVHAYPIGKGSCGLSCFTKPKRSRKDFRFVAPTVEEAVQWVASFGDQQCFINCLPHPLVAKKQASSELFSVPIDTPPELVFRCKSAPKMLVILNPRSGHGRSIKVFHNVVEPIFKLAGIKMEVVKTTKAGHARELASTVDINLCSDGIICVGGDGIINEVLNGLLTRSNPKEGVSIPIGIVPAGSDNSLVWTVLGVRDPISAALSIVKGGLTATDVFAVEWIHTGIIHFGMTVSYYGFVSDVLELSEKYQKRFGPLRYFVAGFLKFMCLPKYSYEVEYLPAQKEDAEGKIRLEKEAVDMQDLYTDVMRRSSREGFPRASSLSSIDSIMTPSVGELDTCSSTHASTEPSEYVRGIDPKMKRLSSGRRDVTAEPEVIHPQAQSTTPNWPRTRSKSRMDKGWMGLTSVQDPPTRCSWGNTGGQDREDISSTVSDPGPIWDAGPKWDTEPSAWDVENSIELPGPPEDIETGLRKQSITPIFEDKWVSRKGHFLGIMVCNHACRTVQSSQVVAPNSEHDDGTMDMLLVHGCGRLRLLRFFILLQTGRHLSLPYVECVKVKSVKIKAGKNTHDSCGIDGELFALHGEVISTMLPEQCRLIGNAPGRHS.

Residues 34–81 are disordered; it reads TGGSQQSSPIVFPEKRNKKVKASSRRGEVTNDPQVKPKPDEHRIDIGG. Over residues 58–81 the composition is skewed to basic and acidic residues; the sequence is RRGEVTNDPQVKPKPDEHRIDIGG. A DAGKc domain is found at 245–384; sequence KSAPKMLVIL…TDVFAVEWIH (140 aa). ATP is bound by residues 255–257 and T287; that span reads NPR. 313–316 is a binding site for substrate; it reads GGDG. Residue D315 is the Proton donor/acceptor of the active site. Residues E320, 345 to 347, and R418 each bind ATP; that span reads GSD. Residues 561–603 form a disordered region; the sequence is MGLTSVQDPPTRCSWGNTGGQDREDISSTVSDPGPIWDAGPKW. 733–735 is a binding site for ATP; sequence DGE.

As to expression, expressed in roots, stems, leaves and at higher levels in flowers.

Involved in the production of sphingolipid metabolites. Active on sphingosine, phytosphingosine (PHS, 4-hydroxysphinganine), D-erythro-dihydrosphingosine, D-erythro-sphingosine and trans-4, trans-8-sphingadienine, an LCB found exclusively in plants, but not on N-acetyl-dihydrosphingosine (C2-dihydroceramide) and D-threo-dihydrosphingosine. This is Sphingoid long-chain bases kinase 1 (LCBK1) from Arabidopsis thaliana (Mouse-ear cress).